Reading from the N-terminus, the 725-residue chain is Catalase-peroxidase (725 aa).

The tryptophyl-tyrosyl-methioninium (Trp-Tyr) (with M-252) cross-link spans 98–226; the sequence is WHMAGSYRTS…LAAVQMGLIY (129 aa). His99 acts as the Proton acceptor in catalysis. The tryptophyl-tyrosyl-methioninium (Tyr-Met) (with W-98) cross-link spans 226–252; it reads YVNPEGVNGKSDPQATAYQMRETFARM. Residue His267 participates in heme b binding.

It belongs to the peroxidase family. Peroxidase/catalase subfamily. Homodimer or homotetramer. The cofactor is heme b. Formation of the three residue Trp-Tyr-Met cross-link is important for the catalase, but not the peroxidase activity of the enzyme.

It carries out the reaction H2O2 + AH2 = A + 2 H2O. The enzyme catalyses 2 H2O2 = O2 + 2 H2O. In terms of biological role, bifunctional enzyme with both catalase and broad-spectrum peroxidase activity. This Paracoccus denitrificans (strain Pd 1222) protein is Catalase-peroxidase.